We begin with the raw amino-acid sequence, 370 residues long: MLSNKDPLSLMAMWGSVKGYDPNQGASFEGPEKRLEVIMRIIDETHSEGLHALGDEVWKGVVGSLNAQIVSKESNEYIRSYVLTESSLFVMRDRIILITCGTTTLLNAVPFVLDAVSDVRGEVEWVSFMHKNYSFPWEQKGPHLSMAEEFNTLRTYFPSGKPFIFGPVDSDHYFLFVYDDVIRPCETENDTQLSMTMYGLDRTQTKHWFSDRFISTGTETAAIRKATKLDKVADDSWKLHDLQFEPCGYSINTIRGAEYQTIHITPEDHCSFASYETNTPAVNYSERINTVLGVFAPIRFSVIVFIDPDSDVGRLYQKGQNVGVEAEYYPKYELQNRTVNEFAPGYVVMKMNYARRAEVTEKDSTDSVEE.

Substrate is bound at residue Phe28. Residues Glu29 and Glu32 contribute to the active site. Residue Glu85 participates in substrate binding. Ser86 functions as the Schiff-base intermediate with substrate; via pyruvic acid in the catalytic mechanism. Pyruvic acid (Ser); by autocatalysis is present on Ser86. The active-site Proton donor; for catalytic activity is Cys100. Catalysis depends on proton acceptor; for processing activity residues Ser250 and His263. Position 267 (Glu267) interacts with substrate.

This sequence belongs to the eukaryotic AdoMetDC family. Forms a heterodimer with catalytically inactive AdoMetDC prozyme; heterodimerization is required to activate AdoMetDC. Pyruvate is required as a cofactor. In terms of processing, is synthesized initially as an inactive proenzyme. Formation of the active enzyme involves a self-maturation process in which the active site pyruvoyl group is generated from an internal serine residue via an autocatalytic post-translational modification. Two non-identical subunits are generated from the proenzyme in this reaction, and the pyruvate is formed at the N-terminus of the alpha chain, which is derived from the carboxyl end of the proenzyme. The post-translation cleavage follows an unusual pathway, termed non-hydrolytic serinolysis, in which the side chain hydroxyl group of the serine supplies its oxygen atom to form the C-terminus of the beta chain, while the remainder of the serine residue undergoes an oxidative deamination to the alpha chain.

It carries out the reaction S-adenosyl-L-methionine + H(+) = S-adenosyl 3-(methylsulfanyl)propylamine + CO2. The protein operates within amine and polyamine biosynthesis; S-adenosylmethioninamine biosynthesis; S-adenosylmethioninamine from S-adenosyl-L-methionine: step 1/1. Its activity is regulated as follows. Allosterically activated by AdoMetDC prozyme. Activated by putrescine. Inhibited by spermine and methylglyoxal-bis(guanylhydrazone) (MGBG) and slightly by spermidine. Inhibited by 5'-([(Z)-4-amino-2-butenyl]methylamino)-5'-deoxyadenosine (MDL 73811). Functionally, probably in association with catalytically inactive AdoMetDC prozyme, catalyzes the decarboxylation of S-adenosyl-L-methionine which is essential for the biosynthesis of the polyamine spermidine. Required for growth and survival during the bloodstream life cycle stage. This is S-adenosylmethionine decarboxylase proenzyme from Trypanosoma cruzi.